The sequence spans 1976 residues: MSHEIVPVDPIDVPSTSYSRPILGPREDSPERATEFTRSLTFREHVSSEPFDSERLPATLASEIQRFLRIANLVESEEPRIAYLCRFHAFEIAHHMDRNSTGRGVRQFKTSLLQRLELDEEFTVRRRKEKSDVRELKRVYHAYKEYIIRHGAAFNLDNSQREKLINARRIASVLYEVLKTVTSGAGPQAIADRESIRAKSEFYVPYNILPLDKGGVHQAIMHLPEIKAAVAIVRNTRGLPPPEEFQRHQPFLDLFEFLQYAFGFQNGNVANQREHLILLLSNTIIRQPQKQSSAPKSGDEAVDALMKKFFKNYTNWCKFLGRKNNIRLPYVKQEALQYKTLYIGLYLLIWGEASNLRFMPECLCYIFHHMAYELHGVLTGAVSMITGEKVAPAYGGGHESFLADVVTPIYMVVQKEAEKNKNGTADHSMWRNYDDLNEFFWSLECFEIGWPMRPEHDFFCVESSETSKPGRWRGMLRFRKQTKKTDEEIEDDEELGVLSEEQPKPTSRWLGKTNFVETRSFWQIFRSFDRMWSFFVLSLQALIIMACHDVGSPLQVFNANIFEDVMSIFITSAILKLIKGILDIIFKWKARNTMPINEKKKRLVKLGFAAMWTIILPVLYSHSRRKYICYFTNYKTWLGEWCFSPYMVAVTIYLTGSAIELVLFFVPAISKYIETSNHGIFKTLSWWGQPRLYVGRGMQETQVSQFKYTFFWILVLLTKFAFSYAFEIKPLIEPTRLIMKVGVRNYEWHEIFPEVKSNAAAIVAVWAPIMVVYFMDTQIWYSVYCTIFGGLYGVLHHLGEIRTLGMLRGRFHTLPSAFNASLIPHSTKDEKRRKQRGFFPFNLGRGSDGQKNSMAKFVLVWNQVINSFRTEDLISNKELDLMTMPLSSEVLSGIIRWPIFLLANKFSTALSIAKDFVGKDEVLYRRIRKDEYMYYAVKECYESLKYILQILVVGDLEKKIISGIINEIEESIRQSSLLEEFKMAELPALHDKCIELVQLLVEGSAEQLQVEKSEELHGKLVKALQDIFELVTNDMMVHGDRILDLLQSREGSGEDTGIFMRVIEPQLFESYGEWRCIHFPLPDSASLSEQIQRFLLLLTVKDSAMDIPENLDARRRLSFFATSLFMDMPDAPKVRNMMSFSVLTPHYQEDINYSTNELHSTKSSVSIIFYMQKIFPDEWKNFLERMGCDNLDALKKEGKEEELRNWASFRGQTLSRTVRGMMYCREALKLQAFLDMADDEDILEGYKDVERSNRPLAAQLDALADMKFTYVVSCQMFGAQKSSGDPHAQDILDLMIKYPSLRVAYVEEREEIVLDVPKKVYYSILVKAVNGFDQEIYRVKLPGPPNIGEGKPENQNHAIVFTRGEALQTIDMNQDHYLEEAFKMRNLLQEFLRNRGRRPPTILGLREHIFTGSVSSLAWFMSYQETSFVTIGQRLLANPLRVRFHYGHPDVFDRIFHITRGGISKSSRTINLSEDVFAGYNTTLRRGCITYNEYLQVGKGRDVGLNQISKFEAKVANGNSEQTISRDIYRLGQRFDFFRMLSCYFTTIGFYFSSLISVIGIYIYLYGQLYLVLSGLQKTLILEAKVKNIKSLETALASQSFIQLGLLTGLPMVMEIGLEKGFLIAFQDFILMQLQLAAFFFTFSLGTKTHYFGRTILHGGAKYRPTGRKVVVFHANFSENYRLYSRSHFIKGFELMILLVVYELFKHTSQSNMAYSFITFSVWFMSFTWLCAPFLFNPSGFTWEIIVGDWRDWNRWIKEQGGIGIQQDKSWQSWWNDEQAHLRGSGVGARCLEIILSLRFFVYQYGLVYHLDITQSNTNIIVYALSWVVILATFFTVKAVDLGRQLFSTRKHLVFRFFKVFVFVSILTIIITLANICHLSVKDLLVSCLAFLPTGWGLILIAQAVRPKIEGTSLWEFTQVLARAYDYGMGVVLFAPMAILAWLPIISAFQTRFLFNEAFNRRLQIQPILAGKKKNR.

Topologically, residues 1 to 530 (MSHEIVPVDP…FWQIFRSFDR (530 aa)) are cytoplasmic. A helical transmembrane segment spans residues 531 to 551 (MWSFFVLSLQALIIMACHDVG). At 552-565 (SPLQVFNANIFEDV) the chain is on the extracellular side. A helical membrane pass occupies residues 566 to 586 (MSIFITSAILKLIKGILDIIF). Over 587–602 (KWKARNTMPINEKKKR) the chain is Cytoplasmic. A helical transmembrane segment spans residues 603 to 623 (LVKLGFAAMWTIILPVLYSHS). Over 624–648 (RRKYICYFTNYKTWLGEWCFSPYMV) the chain is Extracellular. The helical transmembrane segment at 649–669 (AVTIYLTGSAIELVLFFVPAI) threads the bilayer. Residues 670-707 (SKYIETSNHGIFKTLSWWGQPRLYVGRGMQETQVSQFK) are Cytoplasmic-facing. Residues 708–728 (YTFFWILVLLTKFAFSYAFEI) form a helical membrane-spanning segment. Residues 729-759 (KPLIEPTRLIMKVGVRNYEWHEIFPEVKSNA) are Extracellular-facing. The chain crosses the membrane as a helical span at residues 760–780 (AAIVAVWAPIMVVYFMDTQIW). The Cytoplasmic segment spans residues 781-1544 (YSVYCTIFGG…FDFFRMLSCY (764 aa)). A helical transmembrane segment spans residues 1545–1565 (FTTIGFYFSSLISVIGIYIYL). Topologically, residues 1566–1595 (YGQLYLVLSGLQKTLILEAKVKNIKSLETA) are extracellular. The helical transmembrane segment at 1596–1616 (LASQSFIQLGLLTGLPMVMEI) threads the bilayer. The Cytoplasmic segment spans residues 1617–1620 (GLEK). Residues 1621 to 1641 (GFLIAFQDFILMQLQLAAFFF) traverse the membrane as a helical segment. Residues 1642-1688 (TFSLGTKTHYFGRTILHGGAKYRPTGRKVVVFHANFSENYRLYSRSH) are Extracellular-facing. N-linked (GlcNAc...) asparagine glycosylation occurs at Asn-1676. The chain crosses the membrane as a helical span at residues 1689–1709 (FIKGFELMILLVVYELFKHTS). Over 1710–1715 (QSNMAY) the chain is Cytoplasmic. Residues 1716–1736 (SFITFSVWFMSFTWLCAPFLF) form a helical membrane-spanning segment. The Extracellular portion of the chain corresponds to 1737-1790 (NPSGFTWEIIVGDWRDWNRWIKEQGGIGIQQDKSWQSWWNDEQAHLRGSGVGAR). The helical transmembrane segment at 1791 to 1811 (CLEIILSLRFFVYQYGLVYHL) threads the bilayer. Over 1812-1819 (DITQSNTN) the chain is Cytoplasmic. Residues 1820-1840 (IIVYALSWVVILATFFTVKAV) traverse the membrane as a helical segment. Over 1841–1856 (DLGRQLFSTRKHLVFR) the chain is Extracellular. A helical membrane pass occupies residues 1857–1877 (FFKVFVFVSILTIIITLANIC). Residues 1878–1884 (HLSVKDL) are Cytoplasmic-facing. A helical membrane pass occupies residues 1885–1905 (LVSCLAFLPTGWGLILIAQAV). The Extracellular portion of the chain corresponds to 1906-1928 (RPKIEGTSLWEFTQVLARAYDYG). Residues 1929 to 1949 (MGVVLFAPMAILAWLPIISAF) traverse the membrane as a helical segment. Residues 1950-1976 (QTRFLFNEAFNRRLQIQPILAGKKKNR) are Cytoplasmic-facing.

This sequence belongs to the glycosyltransferase 48 family.

Its subcellular location is the cell membrane. The catalysed reaction is [(1-&gt;3)-beta-D-glucosyl](n) + UDP-alpha-D-glucose = [(1-&gt;3)-beta-D-glucosyl](n+1) + UDP + H(+). Its function is as follows. Involved in callose synthesis at the forming cell plate during cytokinesis. During plant growth and development, callose is found as a transitory component of the cell plate in dividing cells, is a major component of pollen mother cell walls and pollen tubes, and is found as a structural component of plasmodesmatal canals. The polypeptide is Putative callose synthase 8 (CALS8) (Arabidopsis thaliana (Mouse-ear cress)).